Reading from the N-terminus, the 412-residue chain is NFATC2-interacting protein (412 aa).

Residues 1–38 form a disordered region; sequence MAEPLRGRGPRSRGGRGARRARGARGRCPRARQSPARL. Basic residues predominate over residues 8-30; the sequence is RGPRSRGGRGARRARGARGRCPR. Residues Ser49, Ser51, Ser79, Ser81, and Ser83 each carry the phosphoserine modification. The disordered stretch occupies residues 58–115; that stretch reads VADPVEVPVARLPAPAKPEQDSDSDSEGAAEGPAGAPRTLVRRRRRRLLDPGEAPVVP. The segment covering 86–96 has biased composition (low complexity); it reads AAEGPAGAPRT. Position 118 is a phosphoserine (Ser118). A Glycyl lysine isopeptide (Lys-Gly) (interchain with G-Cter in SUMO2) cross-link involves residue Lys120. The interval 136-206 is disordered; the sequence is KLCPSEPEDE…SSRNKSRKHT (71 aa). Positions 168 to 227 form a coiled coil; sequence RKKLRKKCEKEEKKMEEFPDQDISPLPQPSSRNKSRKHTEALQKLREVNKRLQDLRSCLS. Over residues 175 to 184 the composition is skewed to basic and acidic residues; it reads CEKEEKKMEE. Residues Ser191, Ser197, and Ser307 each carry the phosphoserine modification. Residues Thr309 and Thr311 each carry the phosphothreonine modification. The Ubiquitin-like domain occupies 341-412; it reads LRLRVQGKEK…ESGDLIEVWG (72 aa). A phosphoserine mark is found at Ser362 and Ser383.

In terms of assembly, interacts with NFATC2, TRAF1, TRAF2 and PRMT1. Interacts with UBE2I/UBC9. Post-translationally, methylation at the N-terminus by PRMT1 modulates interaction with the NFAT complex and results in augmented cytokine production. In terms of tissue distribution, highest level detected in spleen, thymus and testis.

The protein localises to the nucleus. It localises to the cytoplasm. In terms of biological role, in T-helper 2 (Th2) cells, regulates the magnitude of NFAT-driven transcription of a specific subset of cytokine genes, including IL3, IL4, IL5 and IL13, but not IL2. Recruits PRMT1 to the IL4 promoter; this leads to enhancement of histone H4 'Arg-3'-methylation and facilitates subsequent histone acetylation at the IL4 locus, thus promotes robust cytokine expression. Down-regulates formation of poly-SUMO chains by UBE2I/UBC9. This chain is NFATC2-interacting protein (Nfatc2ip), found in Mus musculus (Mouse).